The sequence spans 437 residues: Xylose isomerase (437 aa).

Residues histidine 101 and aspartate 104 contribute to the active site. Mg(2+)-binding residues include glutamate 232, glutamate 268, histidine 271, aspartate 296, aspartate 307, aspartate 309, and aspartate 339.

It belongs to the xylose isomerase family. Homotetramer. Mg(2+) serves as cofactor.

The protein localises to the cytoplasm. The catalysed reaction is alpha-D-xylose = alpha-D-xylulofuranose. In Mannheimia succiniciproducens (strain KCTC 0769BP / MBEL55E), this protein is Xylose isomerase.